Here is a 147-residue protein sequence, read N- to C-terminus: MSQQLTFKQLEKAQQGDSFDWEAVKKQVKYDDNGLIPAIAQQFDSKEVLMMAWMNEAALQETLETGRVCYWSRSRQSYWRKGEESGQIQLLKDLRFDCDGDAILLLVDQTGPACHTGRKSCFYTAIHDHQAKILTNPIIDPEALYKK.

D97 is a binding site for Mg(2+). A Zn(2+)-binding site is contributed by C98. Mg(2+)-binding residues include D99 and D101. Zn(2+)-binding residues include C114 and C121.

Belongs to the PRA-CH family. Homodimer. Mg(2+) is required as a cofactor. The cofactor is Zn(2+).

The protein resides in the cytoplasm. The catalysed reaction is 1-(5-phospho-beta-D-ribosyl)-5'-AMP + H2O = 1-(5-phospho-beta-D-ribosyl)-5-[(5-phospho-beta-D-ribosylamino)methylideneamino]imidazole-4-carboxamide. The protein operates within amino-acid biosynthesis; L-histidine biosynthesis; L-histidine from 5-phospho-alpha-D-ribose 1-diphosphate: step 3/9. Functionally, catalyzes the hydrolysis of the adenine ring of phosphoribosyl-AMP. The protein is Phosphoribosyl-AMP cyclohydrolase of Hydrogenovibrio crunogenus (strain DSM 25203 / XCL-2) (Thiomicrospira crunogena).